The sequence spans 648 residues: MLGLTEAEKIKICLQKQVNSSFSLHNGFGGNLYATEEKRMFELVKPKAGASVLNQSTWIGFGDSRTDQSNSAFPRSADVSAKTADKFRSLSGGSLMLSMFGPPGKVDYLYQGCGKHKVFYEGVNWSPHAAIDCYRKNWTDIKLNFQKSIYELASQSHCMSLVNALDKTIPLQVTKGVAKNCNNSFLKNPALYTQEVKPLEQICGKENLAFFTLPTQFGTYECKLHLVASCYFIYDSKEVYNKRGCGNYFQVIYDSSGKVVGGLDNRVSPYTGNSGDTPTMQCDMLQLKPGRYSVRSSPRFLLMPERSYCFDMKEKGPVTAVQSIWGKGRESDYAVDQACLSTPGCMLIQKQKPYIGEADDHHGDQEMRELLSGLDYEARCISQSGWVNETSPFTEEYLLPPKFGRCPLAAKEESIPKIPDGLLIPTSGTDTTVTKPKSRIFGIDDLIIGLLFVAIVEAGIGGYLLGSRKESGGGVTKESAEKGFEKIGNDIQILRSSTNIAIEKLNDRISHDEQAIRDLTLEIENARSEALLGELGIIRALLVGNISIGLQESLWELASEITNRAGDLAVEVSPGCWIIDNNICDQSCQNFIFKFNETAPVPTIPPLDTKIDLQSDPFYWGSSLGLAITAAISLAALVISGIAICRTK.

The N-terminal stretch at 1 to 7 is a signal peptide; sequence MLGLTEA. A fusion domain-1 region spans residues 8 to 33; that stretch reads EKIKICLQKQVNSSFSLHNGFGGNLY. Over 8-623 the chain is Extracellular; sequence EKIKICLQKQ…QSDPFYWGSS (616 aa). 4 disulfides stabilise this stretch: C13–C576, C203–C245, C222–C309, and C230–C282. Residues N19 and N54 are each glycosylated (N-linked (GlcNAc...) asparagine; by host). Positions 34 to 151 are esterase domain-1; the sequence is ATEEKRMFEL…KLNFQKSIYE (118 aa). S64 (nucleophile) is an active-site residue. 2 N-linked (GlcNAc...) asparagine; by host glycosylation sites follow: N137 and N182. Residues 151–303 form an N-acetyl-9-O-acetylneuraminic acid binding region; it reads ELASQSHCMS…VRSSPRFLLM (153 aa). The esterase domain-2 stretch occupies residues 303–357; sequence MPERSYCFDMKEKGPVTAVQSIWGKGRESDYAVDQACLSTPGCMLIQKQKPYIGE. Residues 358-643 form a fusion domain-2 region; sequence ADDHHGDQEM…LAALVISGIA (286 aa). Residues D359 and H362 each act as charge relay system in the active site. Residues N388, N545, and N596 are each glycosylated (N-linked (GlcNAc...) asparagine; by host). Residues 624 to 644 traverse the membrane as a helical segment; the sequence is LGLAITAAISLAALVISGIAI. Residues 645–648 lie on the Cytoplasmic side of the membrane; the sequence is CRTK.

Belongs to the influenza viruses hemagglutinin family. In terms of assembly, homotrimer of disulfide-linked HEF1-HEF2. Post-translationally, in natural infection, inactive HEF is matured into HEF1 and HEF2 outside the cell by one or more trypsin-like, arginine-specific endoprotease.

The protein localises to the virion membrane. It localises to the host cell membrane. It carries out the reaction N-acetyl-9-O-acetylneuraminate + H2O = N-acetylneuraminate + acetate + H(+). The catalysed reaction is N-acetyl-4-O-acetylneuraminate + H2O = N-acetylneuraminate + acetate + H(+). Functionally, binds to the N-acetyl-9-O-acetylneuraminic acid residues on the cell surface, bringing about the attachment of the virus particle to the cell. Plays a major role in the determination of host range restriction and virulence. Class I viral fusion protein. Responsible for penetration of the virus into the cell cytoplasm by mediating the fusion of the membrane of the endocytosed virus particle with the endosomal membrane. Low pH in endosomes induce an irreversible conformational change in HEF2, releasing the fusion hydrophobic peptide. Several trimers are required to form a competent fusion pore. Displays a receptor-destroying activity which is a neuraminidate-O-acetyl esterase. This activity cleaves off any receptor on the cell surface, which would otherwise prevent virions release. These cleavages prevent self-aggregation and ensure the efficient spread of the progeny virus from cell to cell. The protein is Hemagglutinin-esterase-fusion glycoprotein of Homo sapiens (Human).